The following is a 968-amino-acid chain: Bifunctional glyoxylate cycle protein (968 aa).

The tract at residues 1–443 (MSSAAKNFYQ…AVASQDEEIL (443 aa)) is isocitrate lyase. Residues 444-968 (SLTAQNVAGD…AYDRLVSEGY (525 aa)) are malate synthase. The active-site Proton acceptor is the Arg601. Asp881 serves as the catalytic Proton donor.

It in the N-terminal section; belongs to the isocitrate lyase/PEP mutase superfamily. Isocitrate lyase family. In the C-terminal section; belongs to the malate synthase family. Intestinal and body wall muscle cells.

It carries out the reaction D-threo-isocitrate = glyoxylate + succinate. The catalysed reaction is glyoxylate + acetyl-CoA + H2O = (S)-malate + CoA + H(+). It functions in the pathway carbohydrate metabolism; glyoxylate cycle; (S)-malate from isocitrate: step 1/2. It participates in carbohydrate metabolism; glyoxylate cycle; (S)-malate from isocitrate: step 2/2. This chain is Bifunctional glyoxylate cycle protein (icl-1), found in Caenorhabditis elegans.